The sequence spans 311 residues: Transcription initiation factor IIB (311 aa).

The TFIIB-type zinc-finger motif lies at Lys-11 to Asp-42. Zn(2+) contacts are provided by Cys-15, Cys-18, Cys-34, and Cys-37. Repeat copies occupy residues Ser-128–Leu-211 and Asp-222–Glu-303.

The protein belongs to the TFIIB family.

Its function is as follows. Stabilizes TBP binding to an archaeal box-A promoter. Also responsible for recruiting RNA polymerase II to the pre-initiation complex (DNA-TBP-TFIIB). This chain is Transcription initiation factor IIB, found in Methanosphaera stadtmanae (strain ATCC 43021 / DSM 3091 / JCM 11832 / MCB-3).